The sequence spans 153 residues: Ribosomal RNA large subunit methyltransferase H (153 aa).

S-adenosyl-L-methionine-binding positions include leucine 75, glycine 102, and 121 to 126 (LSKLTL).

The protein belongs to the RNA methyltransferase RlmH family. As to quaternary structure, homodimer.

It is found in the cytoplasm. It catalyses the reaction pseudouridine(1915) in 23S rRNA + S-adenosyl-L-methionine = N(3)-methylpseudouridine(1915) in 23S rRNA + S-adenosyl-L-homocysteine + H(+). Specifically methylates the pseudouridine at position 1915 (m3Psi1915) in 23S rRNA. The sequence is that of Ribosomal RNA large subunit methyltransferase H from Campylobacter jejuni (strain RM1221).